Here is a 174-residue protein sequence, read N- to C-terminus: MKSALAALRAVAAAVVLIVSVPAWADFRGEVVRILDGDTIDVLVNRQTIRVRLADIDAPESGQAFGSRARQRLADLTFRQEVQVTEKEVDRYGRTLGVVYAPLQYPGGQTQLTNINAIMVQEGMAWAYRYYGKPTDAQMYEYEKEARRQRLGLWSDPNAQEPWKWRRASKNATN.

An N-terminal signal peptide occupies residues 1-23 (MKSALAALRAVAAAVVLIVSVPA). Catalysis depends on residues Arg-52, Glu-60, and Arg-94.

Belongs to the thermonuclease family.

The catalysed reaction is Endonucleolytic cleavage to nucleoside 3'-phosphates and 3'-phosphooligonucleotide end-products.. The chain is Micrococcal nuclease (nuc) from Shigella flexneri.